The primary structure comprises 499 residues: RNA polymerase sigma factor SigA (499 aa).

Basic residues-rich tracts occupy residues 1-12 (MSSPKKNFKKPQ) and 77-87 (KKRRGRKPKHA). Disordered regions lie at residues 1–25 (MSSPKKNFKKPQPKTENQKQALNEE) and 68–89 (QENKESDVPKKRRGRKPKHAPL). The sigma-70 factor domain-2 stretch occupies residues 252-322 (LVTSNLRLVV…TRAIADQART (71 aa)). The short motif at 276–279 (DLIQ) is the Interaction with polymerase core subunit RpoC element. The tract at residues 331–412 (ETINRLAKAE…DTDAQMPDEF (82 aa)) is sigma-70 factor domain-3. Residues 425-480 (LLNNCLSEQEELIVRMRIGMPPYNETKTLDEVSQKIKIPREKIRQIETKAIRKLRQ) form a sigma-70 factor domain-4 region. Residues 453 to 472 (LDEVSQKIKIPREKIRQIET) constitute a DNA-binding region (H-T-H motif).

It belongs to the sigma-70 factor family. RpoD/SigA subfamily. In terms of assembly, interacts transiently with the RNA polymerase catalytic core.

It localises to the cytoplasm. Functionally, sigma factors are initiation factors that promote the attachment of RNA polymerase to specific initiation sites and are then released. This sigma factor is the primary sigma factor during exponential growth. In Mycoplasma pneumoniae (strain ATCC 29342 / M129 / Subtype 1) (Mycoplasmoides pneumoniae), this protein is RNA polymerase sigma factor SigA.